Here is a 671-residue protein sequence, read N- to C-terminus: Kinesin-like protein KIF2C (671 aa).

The globular stretch occupies residues 1 to 200 (MIDFDDVAAI…CHPLTMTDPI (200 aa)). Positions 36–62 (KQKRRSVNSKIPAPKESLRTRSTRMST) are disordered. Phosphoserine; by AURKB is present on Ser-41. The short motif at 44–47 (SKIP) is the Microtubule tip localization signal element. A phosphoserine mark is found at Ser-52, Ser-57, Ser-61, Ser-112, Ser-121, Ser-133, and Ser-138. Residues 153-184 (EKKAQNSEMRMKRAQEYDSSFPNWEFARMIKE) are negative regulator of microtubule-binding. 2 disulfides stabilise this stretch: Cys-191-Cys-233 and Cys-290-Cys-506. A Kinesin motor domain is found at 204–534 (RICVCVRKRP…LRYADRVKEL (331 aa)). 294 to 301 (GQTGSGKT) is an ATP binding site. Ser-465, Ser-567, and Ser-579 each carry phosphoserine. Residues 564 to 604 (GNLSKEEEELSSQMSSFNEAMTQIRELEERAVEELKEIIQQ) are a coiled coil.

This sequence belongs to the TRAFAC class myosin-kinesin ATPase superfamily. Kinesin family. MCAK/KIF2 subfamily. As to quaternary structure, interacts with CENPH. Interacts with MTUS2/TIP150; the interaction is direct. Interacts with MAPRE1; the interaction is direct, regulated by phosphorylation and is probably required for targeting to growing microtubule plus ends. Interacts with KIF18B at microtubule tips; this interaction increases the affinity of both partners for microtubule plus ends and is required for robust microtubule depolymerization. Phosphorylation by AURKA or AURKB strongly reduces KIF18B-binding. Phosphorylation by AURKB, regulates association with centromeres and kinetochores and the microtubule depolymerization activity. Post-translationally, ubiquitinated.

Its subcellular location is the cytoplasm. The protein resides in the cytoskeleton. It is found in the nucleus. It localises to the chromosome. The protein localises to the centromere. Its subcellular location is the kinetochore. In terms of biological role, in complex with KIF18B, constitutes the major microtubule plus-end depolymerizing activity in mitotic cells. Regulates the turnover of microtubules at the kinetochore and functions in chromosome segregation during mitosis. Plays a role in chromosome congression and is required for the lateral to end-on conversion of the chromosome-microtubule attachment. This is Kinesin-like protein KIF2C (KIF2C) from Macaca fascicularis (Crab-eating macaque).